The sequence spans 809 residues: MADDEEIDIEGDDDAPLLFDHKDDALALPDLPGYEPNWMFDHGQEIYGRSWTSISQFVQTRTPLQVKNYARHFFKTKVVQKVEEGEDEDVDIEGEESGEEAVMELRSTCGLNPAQPAVVTSDDTSTGENVMEETEAVTEDHPSLDNLVQDDREMPQQETTGDGEQYPMDEHFLPVFPWQPDDTQNRVIVERIEGSVGLGSVRGDKDVRPVPGVEQNTYGPHTDMFQVQNTLLAFEKQVGADRIFEGPSXSKNEATDTQTEVSETKTEVIERQTESQVDATHMHTYGDGLMGSIERLTESVSSSELKEDLKTGIEYVEKDDATDSSSTAKGYDNYTLDHPEDRSKPDSVVSEKWSCEEAMSSHTDGRTFSDSDSGKETYDLPRYNTTIFQGHSEDETSDAGQAEEETFFTFKKPTEEVVLDRSVITEEEKEVHKEFFDGRQTKTPERYLKIRNHLLDCWERTKPEYLRKTVARAGLRNCGDVNCIGRIHGYLERIGAINFGCEEANRGEFPVAKVGVKRNPQGHGEQLALQAARLESMHVTSDELEKQDGGVSQIRPNRSRAARTNLNSFSYDPFKLVPCKRFSEESPAPFSVKIHATALVTIDMHAHISTAEVIGLLGGVFHRDPGALEVASAEPCNSLSTGMQCEMDPVSQTQASEALSQAGYSVVGWYHSHPTFAPNPSVRDIETQTKFQEWFAQGGSPFIGIIVNPYSSTRISPLSRVTCLTISSEWNPPAIQRVKLLSRYAGHTDTTYMDKMLYSLSGHLCRGNADSDEDGNSESLTLLTDIRDIFANSWTSSLGTTPRSSIASL.

Positions 33–78 constitute an SANT domain; sequence GYEPNWMFDHGQEIYGRSWTSISQFVQTRTPLQVKNYARHFFKTKV. 2 disordered regions span residues 113–140 and 320–378; these read PAQP…VTED and DATD…KETY. Composition is skewed to basic and acidic residues over residues 335–345 and 363–378; these read TLDHPEDRSKP and TDGR…KETY. Positions 410–508 constitute an SWIRM domain; sequence FKKPTEEVVL…FGCEEANRGE (99 aa). An MPN domain is found at 592 to 719; it reads VKIHATALVT…YSSTRISPLS (128 aa). 3 residues coordinate Zn(2+): histidine 671, histidine 673, and aspartate 684. The short motif at 671 to 684 is the JAMM motif element; that stretch reads HSHPTFAPNPSVRD.

The protein belongs to the peptidase M67A family. MYSM1 subfamily.

It localises to the nucleus. Functionally, metalloprotease that specifically deubiquitinates monoubiquitinated histone H2A, a specific tag for epigenetic transcriptional repression, thereby acting as a coactivator. Preferentially deubiquitinates monoubiquitinated H2A in hyperacetylated nucleosomes. Deubiquitination of histone H2A leads to facilitate the phosphorylation and dissociation of histone H1 from the nucleosome. Acts as a coactivator by participating in the initiation and elongation steps of androgen receptor (AR)-induced gene activation. The polypeptide is Histone H2A deubiquitinase MYSM1 (MYSM1) (Branchiostoma floridae (Florida lancelet)).